The following is a 941-amino-acid chain: Cilia- and flagella-associated protein 69 (941 aa).

The protein localises to the cell projection. It is found in the cilium. Its subcellular location is the flagellum. Its function is as follows. Cilium- and flagellum-associated protein. In the olfactory epithelium, regulates the speed of activation and termination of the odor response and thus contributes to the robustness of olfactory transduction pathways. Required for sperm flagellum assembly and stability. The chain is Cilia- and flagella-associated protein 69 from Callithrix jacchus (White-tufted-ear marmoset).